A 553-amino-acid chain; its full sequence is Putative transport protein KPK_0013 (553 aa).

5 helical membrane-spanning segments follow: residues isoleucine 4–valine 24, glycine 28–aspartate 48, phenylalanine 65–serine 85, leucine 95–phenylalanine 115, and methionine 158–valine 178. RCK C-terminal domains lie at arginine 192 to glutamine 276 and alanine 279 to asparagine 361. Transmembrane regions (helical) follow at residues methionine 371 to isoleucine 391, alanine 403 to phenylalanine 425, leucine 437 to threonine 457, leucine 464 to leucine 484, tyrosine 493 to alanine 513, and proline 532 to leucine 552.

Belongs to the AAE transporter (TC 2.A.81) family. YidE subfamily.

The protein localises to the cell membrane. This chain is Putative transport protein KPK_0013, found in Klebsiella pneumoniae (strain 342).